The primary structure comprises 312 residues: Putative endonuclease 4 (312 aa).

Zn(2+)-binding residues include histidine 84, histidine 127, glutamate 166, aspartate 202, histidine 205, histidine 239, aspartate 252, histidine 254, and glutamate 284.

Belongs to the AP endonuclease 2 family. Zn(2+) is required as a cofactor.

The catalysed reaction is Endonucleolytic cleavage to 5'-phosphooligonucleotide end-products.. Functionally, endonuclease IV plays a role in DNA repair. It cleaves phosphodiester bonds at apurinic or apyrimidinic sites (AP sites) to produce new 5'-ends that are base-free deoxyribose 5-phosphate residues. This Acanthamoeba polyphaga (Amoeba) protein is Putative endonuclease 4.